A 429-amino-acid polypeptide reads, in one-letter code: Alanine aminotransferase (429 aa).

L-alanine is bound by residues G65 and N204. K265 is subject to N6-(pyridoxal phosphate)lysine. R403 is an L-alanine binding site.

This sequence belongs to the class-I pyridoxal-phosphate-dependent aminotransferase family. As to quaternary structure, homodimer. The cofactor is pyridoxal 5'-phosphate.

It is found in the cytoplasm. It catalyses the reaction L-alanine + 2-oxoglutarate = pyruvate + L-glutamate. In Mycobacterium bovis (strain ATCC BAA-935 / AF2122/97), this protein is Alanine aminotransferase (aspC).